A 161-amino-acid polypeptide reads, in one-letter code: Leucine-rich colipase-like protein 1 (161 aa).

The N-terminal stretch at 1 to 25 is a signal peptide; the sequence is MSVSVWPPLLLLLLLLLLWAVPTFQ.

The polypeptide is Leucine-rich colipase-like protein 1 (Lrcol1) (Mus musculus (Mouse)).